Consider the following 173-residue polypeptide: Thaumatin-like protein PWIR2 (173 aa).

The signal sequence occupies residues 1–20; that stretch reads MATSPVLFLLLAVFAAGASA.

Belongs to the thaumatin family.

This Triticum aestivum (Wheat) protein is Thaumatin-like protein PWIR2.